The sequence spans 278 residues: Para-Rep C1 (278 aa).

Residues Met-1 to Leu-95 form the CRESS-DNA virus Rep endonuclease domain. Residues Phe-8–Asn-11 carry the RCR-1 motif. Residues Glu-33 and His-39 each coordinate a divalent metal cation. The RCR-2 signature appears at His-39–Gln-41. Positions Lys-48 to Lys-69 match the Nuclear localization signal motif. Tyr-78 serves as the catalytic For DNA cleavage activity. The RCR-3 signature appears at Tyr-78–Lys-81. Position 83 (Glu-83) interacts with a divalent metal cation. The Nuclear localization signal signature appears at Leu-95 to His-101. Position 176–178 (Gly-176–Ser-178) interacts with ATP.

It belongs to the nanoviridea/circoviridae replication-associated protein family. In terms of assembly, homooligomer (Potential). Rep binds to repeated DNA motifs (iterons). Requires Mg(2+) as cofactor. It depends on Mn(2+) as a cofactor.

The protein localises to the host nucleus. The catalysed reaction is ATP + H2O = ADP + phosphate + H(+). In terms of biological role, initiates and terminates the replication only of its own subviral DNA molecule. The closed circular ssDNA genome is first converted to a superhelical dsDNA. Rep binds a specific hairpin at the genome origin of replication. Introduces an endonucleolytic nick within the intergenic region of the genome, thereby initiating the rolling circle replication (RCR). Following cleavage, binds covalently to the 5'-phosphate of DNA as a tyrosyl ester. The cleavage gives rise to a free 3'-OH that serves as a primer for the cellular DNA polymerase. The polymerase synthesizes the (+) strand DNA by rolling circle mechanism. After one round of replication, a Rep-catalyzed nucleotidyl transfer reaction releases a circular single-stranded virus genome, thereby terminating the replication. Displays origin-specific DNA cleavage, nucleotidyl transferase, ATPase and helicase activities. The protein is Para-Rep C1 (C1) of Faba bean necrotic yellows C1 alphasatellite (FBNYC1A).